A 1420-amino-acid chain; its full sequence is Mediator of RNA polymerase II transcription subunit 13 (1420 aa).

3 positions are modified to phosphoserine: Ser370, Ser375, and Ser425. The span at 416 to 427 (TTVSNDLENSPL) shows a compositional bias: polar residues. Residues 416–511 (TTVSNDLENS…TNESNKSISD (96 aa)) are disordered. Residues 429–439 (TELEANGRSLE) are compositionally biased toward basic and acidic residues. Residues 440 to 453 (KVNNSVSKTGSVDT) are compositionally biased toward polar residues. Basic and acidic residues predominate over residues 454-484 (LHNKEGTLEQREQNENLPSDKSDSMVDKELF). The span at 494–508 (GDSNKSNSTNESNKS) shows a compositional bias: low complexity. Thr601 is subject to Phosphothreonine. Ser608 carries the post-translational modification Phosphoserine; by PKA. Position 636 is a phosphoserine (Ser636). A disordered region spans residues 653 to 691 (LSSSEEEEDEEENGSSDEDLKSLNVRDDMKPSDNISTNT). Residues 655-669 (SSEEEEDEEENGSSD) are compositionally biased toward acidic residues. Residues 670-683 (EDLKSLNVRDDMKP) are compositionally biased toward basic and acidic residues. Ser748 carries the phosphoserine modification.

The protein belongs to the Mediator complex subunit 13 family. Component of the SRB8-11 complex which consists of SRB8, SSN2/SRB9, SSN3/SRB10 and SSN8/SRB11. The SRB8-11 complex associates with the Mediator complex. The SSN3/SRB10 and SSN8/SRB11 kinase-cyclin pair also associate with the RNA polymerase II holoenzyme. Phosphorylated. PKA-dependent phosphorylation at 'Ser-608' is enhanced by activation of the RAS signaling pathway.

The protein resides in the nucleus. Its function is as follows. Component of the SRB8-11 complex. The SRB8-11 complex is a regulatory module of the Mediator complex which is itself involved in regulation of basal and activated RNA polymerase II-dependent transcription. The SRB8-11 complex may be involved in the transcriptional repression of a subset of genes regulated by Mediator. It may inhibit the association of the Mediator complex with RNA polymerase II to form the holoenzyme complex. The SRB8-11 complex phosphorylates the C-terminal domain (CTD) of the largest subunit of RNA polymerase II RPB1 at serines 2 and 5. The polypeptide is Mediator of RNA polymerase II transcription subunit 13 (SSN2) (Saccharomyces cerevisiae (strain ATCC 204508 / S288c) (Baker's yeast)).